The primary structure comprises 254 residues: tRNA (guanine-N(1)-)-methyltransferase (254 aa).

S-adenosyl-L-methionine-binding positions include Gly-112 and 131 to 136 (IGDFIL).

Belongs to the RNA methyltransferase TrmD family. In terms of assembly, homodimer.

It localises to the cytoplasm. It catalyses the reaction guanosine(37) in tRNA + S-adenosyl-L-methionine = N(1)-methylguanosine(37) in tRNA + S-adenosyl-L-homocysteine + H(+). Functionally, specifically methylates guanosine-37 in various tRNAs. The protein is tRNA (guanine-N(1)-)-methyltransferase of Persephonella marina (strain DSM 14350 / EX-H1).